The following is a 95-amino-acid chain: MIGKEATIPDIVLELQQLVQPTDLHCYEELSEEETETEEEPRRIPYKIVAPCCFCGSKLRLIVLATHAGIRSQEELLLGEVQLVCPNCREKLRHD.

Residues 1 to 40 (MIGKEATIPDIVLELQQLVQPTDLHCYEELSEEETETEEE) are E7 terminal domain. Positions 24 to 28 (LHCYE) match the LXCXE motif; interaction with host RB1 and TMEM173/STING motif. The segment at 52 to 88 (CCFCGSKLRLIVLATHAGIRSQEELLLGEVQLVCPNC) is a zinc-finger region. Positions 70-78 (IRSQEELLL) match the Nuclear export signal motif.

It belongs to the papillomaviridae E7 protein family. In terms of assembly, homodimer. Homooligomer. Interacts with host RB1; this interaction induces dissociation of RB1-E2F1 complex thereby disrupting RB1 activity. Interacts with host EP300; this interaction represses EP300 transcriptional activity. Interacts with protein E2; this interaction inhibits E7 oncogenic activity. Interacts with host TMEM173/STING; this interaction impairs the ability of TMEM173/STING to sense cytosolic DNA and promote the production of type I interferon (IFN-alpha and IFN-beta). Post-translationally, highly phosphorylated.

Its subcellular location is the host cytoplasm. It is found in the host nucleus. Functionally, plays a role in viral genome replication by driving entry of quiescent cells into the cell cycle. Stimulation of progression from G1 to S phase allows the virus to efficiently use the cellular DNA replicating machinery to achieve viral genome replication. E7 protein has both transforming and trans-activating activities. Induces the disassembly of the E2F1 transcription factor from RB1, with subsequent transcriptional activation of E2F1-regulated S-phase genes. Interferes with host histone deacetylation mediated by HDAC1 and HDAC2, leading to transcription activation. Also plays a role in the inhibition of both antiviral and antiproliferative functions of host interferon alpha. Interaction with host TMEM173/STING impairs the ability of TMEM173/STING to sense cytosolic DNA and promote the production of type I interferon (IFN-alpha and IFN-beta). This chain is Protein E7, found in Human papillomavirus 17.